The chain runs to 602 residues: CDPK-related protein kinase (602 aa).

The segment at 1-59 (MGICVSKPSPEPDLHNHHTSIPVNDTSLPPQDNSIPPKDIAIPAQDNNKPPGKKSPFLP) is disordered. A compositionally biased stretch (polar residues) spans 19–34 (TSIPVNDTSLPPQDNS). 3 consecutive repeat copies span residues 20–26 (SIPVNDT), 27–33 (SLPPQDN), and 34–40 (SIPPKDI). Residues 20-40 (SIPVNDTSLPPQDNSIPPKDI) form a 3 X 7 AA tandem repeats of S-[LI]-P-X-X-D-X region. A Protein kinase domain is found at 148 to 410 (FEVGEEVGRG…AAQALCHSWI (263 aa)). ATP-binding positions include 154–162 (VGRGHFGYT) and K180. Catalysis depends on D276, which acts as the Proton acceptor. EF-hand domains lie at 451 to 486 (VDELFYLKEQFVLLEPTKNGTISLENIKQALMRNST), 487 to 527 (DAMK…LEAL), 528 to 563 (DRWEQHARCAYDLFEKDGNRAIMIEELASELGLGPS), and 564 to 602 (IPVHAVLHDWIRHTDGKLSFLGYVKLLHGVSTRAIAKAQ).

This sequence belongs to the protein kinase superfamily. CAMK Ser/Thr protein kinase family. CaMK subfamily.

It carries out the reaction L-seryl-[protein] + ATP = O-phospho-L-seryl-[protein] + ADP + H(+). The catalysed reaction is L-threonyl-[protein] + ATP = O-phospho-L-threonyl-[protein] + ADP + H(+). This is CDPK-related protein kinase (CRK) from Daucus carota (Wild carrot).